A 330-amino-acid chain; its full sequence is Polyprenol dehydrogenase (330 aa).

4 residues coordinate NAD(+): I55, Y208, K212, and T245. Catalysis depends on Y208, which acts as the Proton acceptor.

This sequence belongs to the short-chain dehydrogenases/reductases (SDR) family. In terms of tissue distribution, widely expressed. Highly expressed in the pancreas.

It localises to the lipid droplet. The protein resides in the secreted. The enzyme catalyses a di-trans,poly-cis-polyprenol + NAD(+) = a di-trans,poly-cis-polyprenal + NADH + H(+). It carries out the reaction a di-trans,poly-cis-polyprenol + NADP(+) = a di-trans,poly-cis-polyprenal + NADPH + H(+). It catalyses the reaction a di-trans,poly-cis-dolichol + NADP(+) = a di-trans,poly-cis-dolichal + NADPH + H(+). The catalysed reaction is a di-trans,poly-cis-dolichol + NAD(+) = a di-trans,poly-cis-dolichal + NADH + H(+). It participates in protein modification; protein glycosylation. Functionally, oxidoreductase that plays a key role in early steps of protein N-linked glycosylation by mediating two non-consecutive steps in dolichol biosynthesis. Acts both as a NAD(+)-dependent dehydrogenase and as a NADPH-dependent reductase during the conversion of polyprenol into dolichol. First catalyzes the NAD(+)-dependent dehydrogenation of polyprenol into polyprenal; polyprenal is then reduced into dolichal by SRD5A3. It then catalyzes the NADPH-dependent reduction of dolichal into dolichol. May also acts as a positive regulator of starvation-induced autophagy. In Homo sapiens (Human), this protein is Polyprenol dehydrogenase.